The sequence spans 73 residues: Sodium channel neurotoxin MeuNaTxalpha-13 (73 aa).

An N-terminal signal peptide occupies residues 1–5 (TGVES). An LCN-type CS-alpha/beta domain is found at 7–71 (RDAYIAKPHN…VPIRIPGKCH (65 aa)). 4 cysteine pairs are disulfide-bonded: Cys17–Cys70, Cys21–Cys43, Cys29–Cys53, and Cys33–Cys55. A propeptide spans 72 to 73 (RR) (removed by a carboxypeptidase).

It belongs to the long (4 C-C) scorpion toxin superfamily. Sodium channel inhibitor family. Alpha subfamily. In terms of tissue distribution, expressed by the venom gland.

The protein resides in the secreted. Functionally, alpha toxins bind voltage-independently at site-3 of sodium channels (Nav) and inhibit the inactivation of the activated channels, thereby blocking neuronal transmission. The polypeptide is Sodium channel neurotoxin MeuNaTxalpha-13 (Mesobuthus eupeus (Lesser Asian scorpion)).